A 227-amino-acid polypeptide reads, in one-letter code: PKHD-type hydroxylase BamMC406_5004 (227 aa).

The Fe2OG dioxygenase domain maps to 80–179 (QVYPPLFNRY…RVASFFWVQS (100 aa)). Residues H98, D100, and H160 each coordinate Fe cation. R170 contributes to the 2-oxoglutarate binding site.

Fe(2+) is required as a cofactor. Requires L-ascorbate as cofactor.

The polypeptide is PKHD-type hydroxylase BamMC406_5004 (Burkholderia ambifaria (strain MC40-6)).